The chain runs to 141 residues: Galactose-6-phosphate isomerase subunit LacA 1 (141 aa).

It belongs to the LacAB/RpiB family. In terms of assembly, heteromultimeric protein consisting of LacA and LacB.

The catalysed reaction is aldehydo-D-galactose 6-phosphate = keto-D-tagatose 6-phosphate. It functions in the pathway carbohydrate metabolism; D-galactose 6-phosphate degradation; D-tagatose 6-phosphate from D-galactose 6-phosphate: step 1/1. The polypeptide is Galactose-6-phosphate isomerase subunit LacA 1 (Streptococcus pyogenes serotype M1).